The sequence spans 363 residues: DNA replication and repair protein RecF (363 aa).

30-37 (GPNGSGKT) lines the ATP pocket.

Belongs to the RecF family.

The protein localises to the cytoplasm. The RecF protein is involved in DNA metabolism; it is required for DNA replication and normal SOS inducibility. RecF binds preferentially to single-stranded, linear DNA. It also seems to bind ATP. The chain is DNA replication and repair protein RecF from Vibrio cholerae serotype O1 (strain ATCC 39541 / Classical Ogawa 395 / O395).